The chain runs to 130 residues: Small ribosomal subunit protein uS8 (130 aa).

It belongs to the universal ribosomal protein uS8 family. As to quaternary structure, part of the 30S ribosomal subunit.

One of the primary rRNA binding proteins, it binds directly to 16S rRNA central domain where it helps coordinate assembly of the platform of the 30S subunit. This is Small ribosomal subunit protein uS8 from Methanocella arvoryzae (strain DSM 22066 / NBRC 105507 / MRE50).